The primary structure comprises 862 residues: Dipeptidyl peptidase 9 (862 aa).

Residues serine 729, aspartate 807, and histidine 839 each act as charge relay system in the active site. Serine 729 lines the Val-boroPro pocket.

It belongs to the peptidase S9B family. DPPIV subfamily. In terms of assembly, homodimer. Forms a ternary complex with NLRP1, composed of a DPP9 homodimer, one full-length NLRP1 protein, and one cleaved C-terminus of NLRP1 (NACHT, LRR and PYD domains-containing protein 1, C-terminus). Forms a ternary complex with CARD8, composed of a DPP9 homodimer, one full-length NLRP1 protein, and one cleaved C-terminus of CARD8 (Caspase recruitment domain-containing protein 8, C-terminus). In the ternary complex, only one subunit of the DPP9 homodimer is bound to NLRP1 or CARD8. As to expression, detected in kidney, skin, brain, thymus and liver (at protein level).

It localises to the cytoplasm. The protein resides in the cytosol. It catalyses the reaction Release of an N-terminal dipeptide, Xaa-Yaa-|-Zaa-, from a polypeptide, preferentially when Yaa is Pro, provided Zaa is neither Pro nor hydroxyproline.. Inhibited by the serine proteinase inhibitor 4-(2-aminoethyl)benzenesulphonyl fluoride (AEBSF), and by di-isopropylfluorophosphate. Inhibited by Val-boroPro (Talabostat, PT-100), a non-selective inhibitor, which triggers pyroptosis in monocytes and macrophages. Val-boroPro inhibits activity by binding to the active site, mimicking a substrate-bound state, thereby displacing the C-terminal fragment of NLRP1, leading to activation of the NLRP1 inflammasome. In contrast, Val-boroPro does not directly displaces CARD8: it acts by promoting degradation of the N-terminal part of CARD8, leading to indirect disruption of the ternary complex. Dipeptidyl peptidase that cleaves off N-terminal dipeptides from proteins having a Pro or Ala residue at position 2. Acts as a key inhibitor of caspase-1-dependent monocyte and macrophage pyroptosis in resting cells by preventing activation of NLRP1 and CARD8. Sequesters the cleaved C-terminal part of NLRP1 and CARD8, which respectively constitute the active part of the NLRP1 and CARD8 inflammasomes, in a ternary complex, thereby preventing their oligomerization and activation. The dipeptidyl peptidase activity is required to suppress NLRP1 and CARD8; however, neither NLRP1 nor CARD8 are bona fide substrates of DPP9, suggesting the existence of substrate(s) required for NLRP1 and CARD8 inhibition. This Mus musculus (Mouse) protein is Dipeptidyl peptidase 9.